The primary structure comprises 348 residues: Putative methylesterase 14, chloroplastic (348 aa).

Disordered stretches follow at residues 1–29 (MGNK…MNRS) and 60–80 (GSMS…SDPF). The transit peptide at 1–76 (MGNKIISMMK…GSTSTRKRTL (76 aa)) directs the protein to the chloroplast. A Phosphoserine modification is found at S77. The active-site Acyl-ester intermediate is the S172. Residues D299 and H327 each act as charge relay system in the active site.

This sequence belongs to the AB hydrolase superfamily. Methylesterase family.

Its subcellular location is the plastid. The protein resides in the chloroplast. In terms of biological role, putative methylesterase. The polypeptide is Putative methylesterase 14, chloroplastic (Arabidopsis thaliana (Mouse-ear cress)).